A 1403-amino-acid polypeptide reads, in one-letter code: Centrosomal protein of 162 kDa (1403 aa).

A disordered region spans residues 19 to 44 (ELSDDSFENSNETPSQPNKDRKKKDT). A compositionally biased stretch (polar residues) spans 26–35 (ENSNETPSQP). Phosphoserine occurs at positions 156 and 159. 3 disordered regions span residues 171-235 (NVEP…EKTG), 305-342 (DTGE…TTES), and 449-586 (NPSL…SDDS). The segment covering 176–189 (EGGRENESEHKELP) has biased composition (basic and acidic residues). The span at 192 to 204 (YSDDFEDAEDTDE) shows a compositional bias: acidic residues. Positions 206 to 220 (LITKDEETRPKENPE) are enriched in basic and acidic residues. Residues 449–466 (NPSLLPQDNKANQTSRSR) show a composition bias toward polar residues. Ser-468 is modified (phosphoserine). Over residues 481-496 (PCKKARSAPPLPRRKP) the composition is skewed to basic residues. Positions 504-517 (ARSSGYSKPSSPLQ) are enriched in polar residues. Basic and acidic residues-rich tracts occupy residues 522–532 (LEKKTSKDNTK) and 567–581 (PHRE…RPED). Coiled-coil stretches lie at residues 610-1120 (KRAQ…MLSR), 1170-1205 (EVLE…QLES), and 1234-1385 (CQNA…LHRQ).

The protein belongs to the CEP162 family. As to quaternary structure, interacts with alpha-tubulin. Interacts with CPNE4. Interacts with CEP290.

The protein localises to the cytoplasm. It is found in the cytoskeleton. It localises to the microtubule organizing center. The protein resides in the centrosome. Its subcellular location is the centriole. The protein localises to the spindle. It is found in the nucleus. Its function is as follows. Required to promote assembly of the transition zone in primary cilia. Acts by specifically recognizing and binding the axonemal microtubule. Localizes to the distal ends of centrioles before ciliogenesis and directly binds to axonemal microtubule, thereby promoting and restricting transition zone formation specifically at the cilia base. Required to mediate CEP290 association with microtubules. The chain is Centrosomal protein of 162 kDa (Cep162) from Rattus norvegicus (Rat).